Consider the following 1515-residue polypeptide: Homeobox protein cut-like 1 (1515 aa).

Positions L56 to S361 form a coiled coil. Residues E393–S405 are compositionally biased toward polar residues. Disordered stretches follow at residues E393–G453, P509–G546, P644–D666, and L680–D702. Residues G422 to L432 show a composition bias toward pro residues. Phosphoserine is present on S427. The segment covering T436–H447 has biased composition (polar residues). Low complexity predominate over residues S514–S544. Positions A540–R627 form a DNA-binding region, CUT 1. S761 is subject to Phosphoserine. 2 disordered regions span residues P769–A871 and Y884–P923. Residues K783, K809, and K840 each participate in a glycyl lysine isopeptide (Lys-Gly) (interchain with G-Cter in SUMO2) cross-link. Residues P828–A852 show a composition bias toward basic and acidic residues. Polar residues-rich tracts occupy residues G853–S868 and Y884–L906. Residue S904 is modified to Phosphoserine. The CUT 2 DNA-binding region spans Q929–Q1016. The span at Q1032 to T1044 shows a compositional bias: polar residues. Residues Q1032 to G1105 are disordered. Positions S1045 to S1061 are enriched in low complexity. S1054 and S1064 each carry phosphoserine. Positions Q1112 to M1199 form a DNA-binding region, CUT 3. A disordered region spans residues R1207–P1242. Positions L1239–L1298 form a DNA-binding region, homeobox. A Phosphoserine modification is found at S1265. K1279 is covalently cross-linked (Glycyl lysine isopeptide (Lys-Gly) (interchain with G-Cter in SUMO2)). Residues S1307–K1488 form a disordered region. Residues A1313–S1328 show a composition bias toward low complexity. Residues D1331–E1343 show a composition bias toward acidic residues. S1332 bears the Phosphoserine mark. Residues A1365–K1378 are compositionally biased toward basic and acidic residues. The span at A1406–S1468 shows a compositional bias: low complexity. S1468, S1496, and S1506 each carry phosphoserine.

It belongs to the CUT homeobox family. In terms of assembly, interacts with BANP. Interacts with SATB1 (via DNA-binding domains); the interaction inhibits the attachment of both proteins to DNA. Post-translationally, phosphorylated by PKA. In terms of processing, as cells progress into S phase, a fraction of CUX1 molecules is proteolytically processed into N-terminally truncated proteins of 110 kDa by CTSL. Cell cycle-dependent processing of CUX1 serves to generate a CDP/Cux p110 with distinct DNA binding and transcriptional properties. Testis-specific where it is expressed in germ cells.

It localises to the nucleus. Its function is as follows. Transcription factor involved in the control of neuronal differentiation in the brain. Regulates dendrite development and branching, and dendritic spine formation in cortical layers II-III. Also involved in the control of synaptogenesis. In addition, it has probably a broad role in mammalian development as a repressor of developmentally regulated gene expression. May act by preventing binding of positively-activing CCAAT factors to promoters. Component of nf-munr repressor; binds to the matrix attachment regions (MARs) (5' and 3') of the immunoglobulin heavy chain enhancer. Represses T-cell receptor (TCR) beta enhancer function by binding to MARbeta, an ATC-rich DNA sequence located upstream of the TCR beta enhancer. Binds to the TH enhancer; may require the basic helix-loop-helix protein TCF4 as a coactivator. Functionally, plays a role in cell cycle progression, in particular at the G1/S transition. As cells progress into S phase, a fraction of CUX1 molecules is proteolytically processed into N-terminally truncated proteins of 110 kDa. While CUX1 only transiently binds to DNA and carries the CCAAT-displacement activity, CDP/Cux p110 makes a stable interaction with DNA and stimulates expression of genes such as POLA1. The protein is Homeobox protein cut-like 1 of Mus musculus (Mouse).